Reading from the N-terminus, the 520-residue chain is Cell division control protein 3 (520 aa).

Positions Met-1–Phe-24 are enriched in basic and acidic residues. The disordered stretch occupies residues Met-1 to Leu-83. N-acetylserine is present on Ser-2. Phosphoserine is present on Ser-2. Lys-4 is covalently cross-linked (Glycyl lysine isopeptide (Lys-Gly) (interchain with G-Cter in SUMO)). A Phosphoserine modification is found at Ser-9. Glycyl lysine isopeptide (Lys-Gly) (interchain with G-Cter in SUMO) cross-links involve residues Lys-11 and Lys-30. Position 47 is a phosphothreonine (Thr-47). The span at Asp-51–Val-64 shows a compositional bias: basic and acidic residues. At Ser-60 the chain carries Phosphoserine. Lys-63 is covalently cross-linked (Glycyl lysine isopeptide (Lys-Gly) (interchain with G-Cter in SUMO)). At Ser-77 the chain carries Phosphoserine. In terms of domain architecture, Septin-type G spans Asn-116–Lys-411. Residues Gly-126 to Thr-133 form a G1 motif region. GTP is bound at residue Gly-126–Thr-133. Over residues Glu-156–Gln-167 the composition is skewed to acidic residues. The tract at residues Glu-156–Lys-181 is disordered. Basic and acidic residues predominate over residues Gly-168–Arg-179. Residue Ser-175 is modified to Phosphoserine. The segment at Asp-204–Gly-207 is G3 motif. Residues Gly-207, Lys-287–Glu-295, Gly-344, and Arg-360 contribute to the GTP site. Positions Ala-286 to Asp-289 are G4 motif. Lys-287 participates in a covalent cross-link: Glycyl lysine isopeptide (Lys-Gly) (interchain with G-Cter in SUMO). A coiled-coil region spans residues Ile-427–His-508. A Phosphothreonine modification is found at Thr-468. The segment at Glu-496–Arg-520 is disordered. The segment covering Leu-497–Pro-510 has biased composition (polar residues). Ser-509 carries the phosphoserine modification.

This sequence belongs to the TRAFAC class TrmE-Era-EngA-EngB-Septin-like GTPase superfamily. Septin GTPase family. In terms of assembly, component of the septin complex which consists of CDC3, CDC10, CDC11, CDC12 and probably SHS1 and rearranges to a cortical collar of highly ordered filaments at the mother-bud-neck. A complex formed by CDC3, CDC10, CDC11 and CDC12 is capable of forming long filaments in vitro and the components seem to be present in a 2:2:2:2 arrangement in vivo. The filaments are proposed to be formed by the end-to-end polymerization of CDC3-CDC12-CDC11 complexes with CDC10 serving as a bridge to bundle the polymers into paired filaments. Component of the GIN4 complex composed of at least BNI5, CDC3, CDC10, CDC11, CDC12, GIN4, NAP1 and SHS1. Self-associates. Interacts with SIZ1 and SYP1. Phosphorylated by CDC28. Phosphorylation at the end of G1 may facilitate initiation of a new cell cycle by promoting disassembly of the obsolete septin ring from the previous cell cycle. Post-translationally, sumoylated during mitosis on the mother cell side of the bud neck by UBC9/SIZ1. Sumoylation probably plays a central role in regulating septin ring disassembly during the cell cycle.

It is found in the membrane. It localises to the bud neck. In terms of biological role, septins are GTPases involved in cytokinesis that assemble early in the cell cycle as a patch at the incipient bud site and form a ring approximate 15 minutes before bud emergence, which transforms into an hour-glass shaped collar of cortical filaments that spans both sides of the mother-bud neck. This collar persists until just before cytokinesis, when it splits into two rings that occupy opposite sides of the neck. The septins at the bud neck serve as a structural scaffold that recruits different components involved in diverse processes at specific stages during the cell cycle. Many proteins bind asymmetrically to the septin collar. The septin assembly is regulated by protein kinases GIN4 and/or CLA4. May act by recruiting MYO1 and HOF1, a protein involved in septation, to the site of cleavage. Septins are also involved in cell morphogenesis, bud site selection, chitin deposition, cell cycle regulation, cell compartmentalization and spore wall formation. The sequence is that of Cell division control protein 3 (CDC3) from Saccharomyces cerevisiae (strain ATCC 204508 / S288c) (Baker's yeast).